A 184-amino-acid chain; its full sequence is Peptide deformylase (184 aa).

Residues Cys92 and His134 each contribute to the Fe cation site. Glu135 is a catalytic residue. Residue His138 participates in Fe cation binding.

It belongs to the polypeptide deformylase family. Fe(2+) is required as a cofactor.

It carries out the reaction N-terminal N-formyl-L-methionyl-[peptide] + H2O = N-terminal L-methionyl-[peptide] + formate. Functionally, removes the formyl group from the N-terminal Met of newly synthesized proteins. Requires at least a dipeptide for an efficient rate of reaction. N-terminal L-methionine is a prerequisite for activity but the enzyme has broad specificity at other positions. This chain is Peptide deformylase, found in Psychrobacter arcticus (strain DSM 17307 / VKM B-2377 / 273-4).